The chain runs to 108 residues: BH3-like motif-containing cell death inducer (108 aa).

The BH3-like motif lies at 5 to 12; sequence LPIEGQEI.

In terms of tissue distribution, ubiquitously expressed.

It is found in the cytoplasm. Its subcellular location is the mitochondrion. Its function is as follows. Functions as a proapoptotic molecule through the caspase-dependent mitochondrial pathway of cell death. The polypeptide is BH3-like motif-containing cell death inducer (BLID) (Homo sapiens (Human)).